The chain runs to 238 residues: Lactate utilization protein A (238 aa).

The protein belongs to the LutA/YkgE family.

Is involved in L-lactate degradation and allows cells to grow with lactate as the sole carbon source. The chain is Lactate utilization protein A from Bacillus velezensis (strain DSM 23117 / BGSC 10A6 / LMG 26770 / FZB42) (Bacillus amyloliquefaciens subsp. plantarum).